Reading from the N-terminus, the 529-residue chain is Probable bifunctional tRNA threonylcarbamoyladenosine biosynthesis protein (529 aa).

Positions 1 to 324 (MIVLGLEGTA…FRIDEVDAPW (324 aa)) are kae1. 3 residues coordinate Fe cation: H107, H111, and Y128. L-threonylcarbamoyladenylate contacts are provided by residues 128-132 (YVSGG), D160, G173, E177, and N257. D285 contributes to the Fe cation binding site. One can recognise a Protein kinase domain in the interval 329 to 529 (SRKDYGKAGA…SAIRRRHRYV (201 aa)). ATP-binding positions include 335–342 (KAGAESRI) and K355. D447 functions as the Proton acceptor; for kinase activity in the catalytic mechanism.

The protein in the N-terminal section; belongs to the KAE1 / TsaD family. In the C-terminal section; belongs to the protein kinase superfamily. Tyr protein kinase family. BUD32 subfamily. As to quaternary structure, component of the KEOPS complex that consists of Kae1, Bud32, Cgi121 and Pcc1; the whole complex dimerizes. Fe(2+) serves as cofactor.

The protein resides in the cytoplasm. The catalysed reaction is L-seryl-[protein] + ATP = O-phospho-L-seryl-[protein] + ADP + H(+). The enzyme catalyses L-threonyl-[protein] + ATP = O-phospho-L-threonyl-[protein] + ADP + H(+). It catalyses the reaction L-threonylcarbamoyladenylate + adenosine(37) in tRNA = N(6)-L-threonylcarbamoyladenosine(37) in tRNA + AMP + H(+). Required for the formation of a threonylcarbamoyl group on adenosine at position 37 (t(6)A37) in tRNAs that read codons beginning with adenine. Is a component of the KEOPS complex that is probably involved in the transfer of the threonylcarbamoyl moiety of threonylcarbamoyl-AMP (TC-AMP) to the N6 group of A37. The Kae1 domain likely plays a direct catalytic role in this reaction. The Bud32 domain probably displays kinase activity that regulates Kae1 function. This is Probable bifunctional tRNA threonylcarbamoyladenosine biosynthesis protein from Thermoplasma acidophilum (strain ATCC 25905 / DSM 1728 / JCM 9062 / NBRC 15155 / AMRC-C165).